A 477-amino-acid chain; its full sequence is Cysteine--tRNA ligase (477 aa).

Zn(2+) is bound at residue Cys-42. Positions 44 to 54 (ATVQGLPHIGH) match the 'HIGH' region motif. 3 residues coordinate Zn(2+): Cys-220, His-245, and Glu-249. A 'KMSKS' region motif is present at residues 276 to 280 (KMSKS). Lys-279 serves as a coordination point for ATP.

The protein belongs to the class-I aminoacyl-tRNA synthetase family. As to quaternary structure, monomer. The cofactor is Zn(2+).

The protein localises to the cytoplasm. It catalyses the reaction tRNA(Cys) + L-cysteine + ATP = L-cysteinyl-tRNA(Cys) + AMP + diphosphate. This is Cysteine--tRNA ligase from Mycolicibacterium smegmatis (strain ATCC 700084 / mc(2)155) (Mycobacterium smegmatis).